The chain runs to 143 residues: MPTPSMEDYLERIYMLIEEKGYARVSDIAEALEVHPSSVTKMVQKLDKSDYLVYERYRGLVLTAKGNKIGKRLVYRHELLEDFMKIIGVDDTHIYKDVEGIEHHISWDAIDRIGDLVQYFQENQTRIDDLREIQKRNDFPEDE.

Residues 1–63 form the HTH dtxR-type domain; that stretch reads MPTPSMEDYL…YERYRGLVLT (63 aa). Mn(2+)-binding residues include Asp8, Glu11, His77, Glu99, Glu102, and His103.

It belongs to the DtxR/MntR family. Homodimer.

The protein localises to the cytoplasm. DNA binding is strongly activated by Mn(2+). Its function is as follows. Central regulator of manganese homeostasis. This is HTH-type transcriptional regulator MntR from Shouchella clausii (strain KSM-K16) (Alkalihalobacillus clausii).